Reading from the N-terminus, the 210-residue chain is Large ribosomal subunit protein uL4 (210 aa).

The tract at residues 44–77 is disordered; it reads ARQGNASSKTRSEVRGGGRKPWRQKGTGRARAGS. A compositionally biased stretch (basic residues) spans 60-71; sequence GGRKPWRQKGTG.

This sequence belongs to the universal ribosomal protein uL4 family. As to quaternary structure, part of the 50S ribosomal subunit.

Functionally, one of the primary rRNA binding proteins, this protein initially binds near the 5'-end of the 23S rRNA. It is important during the early stages of 50S assembly. It makes multiple contacts with different domains of the 23S rRNA in the assembled 50S subunit and ribosome. Its function is as follows. Forms part of the polypeptide exit tunnel. The chain is Large ribosomal subunit protein uL4 from Microcystis aeruginosa (strain NIES-843 / IAM M-2473).